The chain runs to 317 residues: tRNA dimethylallyltransferase (317 aa).

Residue 19 to 26 coordinates ATP; that stretch reads GPTASGKS. A substrate-binding site is contributed by 21-26; that stretch reads TASGKS. The segment at 49 to 52 is interaction with substrate tRNA; it reads DSAQ.

Belongs to the IPP transferase family. In terms of assembly, monomer. Mg(2+) serves as cofactor.

The catalysed reaction is adenosine(37) in tRNA + dimethylallyl diphosphate = N(6)-dimethylallyladenosine(37) in tRNA + diphosphate. In terms of biological role, catalyzes the transfer of a dimethylallyl group onto the adenine at position 37 in tRNAs that read codons beginning with uridine, leading to the formation of N6-(dimethylallyl)adenosine (i(6)A). The chain is tRNA dimethylallyltransferase from Erythrobacter litoralis (strain HTCC2594).